Reading from the N-terminus, the 302-residue chain is L-threonate dehydrogenase (302 aa).

NAD(+) is bound by residues 7–35 and threonine 102; that span reads FHVG…TWGA. Lysine 178 is an active-site residue. Residue lysine 246 participates in NAD(+) binding.

Belongs to the HIBADH-related family. L-threonate dehydrogenase subfamily.

It carries out the reaction L-threonate + NAD(+) = 2-dehydro-L-erythronate + NADH + H(+). Catalyzes oxidation of L-threonate to 2-oxo-tetronate. Can use either NAD(+) or NADP(+) as cosubstrate, with a preference for NAD(+). The chain is L-threonate dehydrogenase from Escherichia coli O6:H1 (strain CFT073 / ATCC 700928 / UPEC).